Consider the following 196-residue polypeptide: Nucleoside triphosphate pyrophosphatase (196 aa).

Catalysis depends on aspartate 73, which acts as the Proton acceptor.

Belongs to the Maf family. Requires a divalent metal cation as cofactor.

The protein localises to the cytoplasm. It carries out the reaction a ribonucleoside 5'-triphosphate + H2O = a ribonucleoside 5'-phosphate + diphosphate + H(+). The enzyme catalyses a 2'-deoxyribonucleoside 5'-triphosphate + H2O = a 2'-deoxyribonucleoside 5'-phosphate + diphosphate + H(+). Functionally, nucleoside triphosphate pyrophosphatase. May have a dual role in cell division arrest and in preventing the incorporation of modified nucleotides into cellular nucleic acids. The protein is Nucleoside triphosphate pyrophosphatase of Anaplasma marginale (strain Florida).